The primary structure comprises 329 residues: Deoxynucleotidyltransferase terminal-interacting protein 1 (329 aa).

Disordered stretches follow at residues M1 to E22 and K147 to S178. The important for dimerization stretch occupies residues M56 to K147. Positions K147–H158 are enriched in basic and acidic residues. Residues R159–G173 constitute a DNA-binding region (a.T hook). Position 161 is a phosphoserine (S161). A Nuclear localization signal motif is present at residues P164–R170. An important for DNA and nucleosome binding region spans residues R197 to T316. A DNA-binding region (H-T-H motif) is located at residues G216–P237.

In terms of assembly, monomer and homodimer. A minor proportion may form homotrimers. Interacts with ZNF541. Interacts with the terminal deoxynucleotidyltransferase DNTT. Interacts with TRERF1. Identified in a histone deacetylase complex that contains DNTTIP1, HDAC1 and MIDEAS; this complex assembles into a tetramer that contains four copies of each protein chain. Component of a histone deacetylase complex containing DNTTIP1, ZNF541, HDAC1 and HDAC2. Identified in a complex with KCTD19, HDAC1, HDAC2 and ZNF541.

Its subcellular location is the nucleus. Functionally, increases DNTT terminal deoxynucleotidyltransferase activity (in vitro). Also acts as a transcriptional regulator, binding to the consensus sequence 5'-GNTGCATG-3' following an AT-tract. Associates with RAB20 promoter and positively regulates its transcription. Binds DNA and nucleosomes; may recruit HDAC1 complexes to nucleosomes or naked DNA. This chain is Deoxynucleotidyltransferase terminal-interacting protein 1 (DNTTIP1), found in Homo sapiens (Human).